The following is a 1362-amino-acid chain: Insulin receptor (1362 aa).

Positions 1-37 are cleaved as a signal peptide; the sequence is MGQGVLRGEGHPNNNPNSKVGWKSLVGIITIFMLILC. Residues 38 to 184 are leucine-rich region; it reads DQSDGKICYS…DSVEDNYIEL (147 aa). Cysteine 45 and cysteine 63 are disulfide-bonded. N-linked (GlcNAc...) asparagine glycans are attached at residues asparagine 53, asparagine 115, and asparagine 148. 14 disulfide bridges follow: cysteine 163-cysteine 192, cysteine 196-cysteine 219, cysteine 206-cysteine 225, cysteine 229-cysteine 238, cysteine 233-cysteine 244, cysteine 245-cysteine 253, cysteine 249-cysteine 262, cysteine 265-cysteine 274, cysteine 278-cysteine 290, cysteine 296-cysteine 321, cysteine 303-cysteine 311, cysteine 325-cysteine 338, cysteine 341-cysteine 345, and cysteine 349-cysteine 370. A glycan (N-linked (GlcNAc...) asparagine) is linked at asparagine 332. Residues asparagine 374, asparagine 434, and asparagine 455 are each glycosylated (N-linked (GlcNAc...) asparagine). Cysteine 472 and cysteine 505 form a disulfide bridge. Fibronectin type-III domains follow at residues 508-629 and 633-730; these read NLLT…TNET and VPLD…IQKE. N-linked (GlcNAc...) asparagine glycans are attached at residues asparagine 551, asparagine 627, asparagine 642, asparagine 660, and asparagine 707. Cystine bridges form between cysteine 683–cysteine 896 and cysteine 822–cysteine 830. The disordered stretch occupies residues 694 to 714; that stretch reads WTPPTEIDENGNENQTEHTSV. Over residues 705–714 the composition is skewed to polar residues; that stretch reads NENQTEHTSV. Residues 741-749 are insulin-binding; the sequence is ENYLHNEVF. Over 759–951 the chain is Extracellular; that stretch reads DLFGVANGTL…PDHPHSNIVK (193 aa). N-linked (GlcNAc...) asparagine glycans are attached at residues asparagine 765 and asparagine 779. A Fibronectin type-III 3 domain is found at 849-944; that stretch reads VVGPITYEYV…EQAYFQVPDH (96 aa). N-linked (GlcNAc...) asparagine glycosylation is found at asparagine 917 and asparagine 930. Residues 952–972 form a helical membrane-spanning segment; sequence IITGPIIAVFLLLIVLVYCVV. The Cytoplasmic portion of the chain corresponds to 973 to 1362; sequence QKKKDAEGPA…ILSLPRSSPS (390 aa). Residue tyrosine 993 is modified to Phosphotyrosine; by autocatalysis. The Protein kinase domain maps to 1012–1287; it reads INLLRELGQG…MLKDDLRPSF (276 aa). ATP contacts are provided by residues serine 1022, lysine 1046, and 1093 to 1099; that span reads ELMAHGD. Aspartate 1148 (proton donor/acceptor) is an active-site residue. ATP is bound by residues 1152–1153 and aspartate 1166; that span reads RN. Phosphotyrosine; by autocatalysis is present on residues tyrosine 1174, tyrosine 1178, tyrosine 1179, tyrosine 1335, and tyrosine 1341.

This sequence belongs to the protein kinase superfamily. Tyr protein kinase family. Insulin receptor subfamily. Tetramer of 2 alpha and 2 beta chains linked by disulfide bonds. The alpha chains contribute to the formation of the ligand-binding domain, while the beta chains carry the kinase domain. In terms of processing, autophosphorylated on tyrosine residues in response to insulin. In terms of tissue distribution, localized mainly to the envelope in oocytes. Localized to the animal hemisphere during early embryonic cleavage. Expressed during organogenesis in regions of ecto- and mesodermic origins. Expressed in the entire encephalon, the otic and optic vesicles, the gills, the somites and the pronephric tubules of the embryo. Also found in adult liver, muscle and regenerated forelimbs.

The protein localises to the cell membrane. It carries out the reaction L-tyrosyl-[protein] + ATP = O-phospho-L-tyrosyl-[protein] + ADP + H(+). Its activity is regulated as follows. Autophosphorylation activates the kinase activity. Functionally, receptor tyrosine kinase which mediates actions of insulin. May be required for forelimb regeneration. The sequence is that of Insulin receptor (insr) from Xenopus laevis (African clawed frog).